Reading from the N-terminus, the 382-residue chain is Norsolorinic acid reductase B (382 aa).

Asp-64 lines the NADP(+) pocket. Tyr-69 acts as the Proton donor in catalysis. His-143 is a substrate binding site. Residues 173-174, Gln-199, 228-238, and 302-310 contribute to the NADP(+) site; these read SD, GVLNQGRFRTE, and RKVDHLTGV.

This sequence belongs to the aldo/keto reductase family. Aldo/keto reductase 2 subfamily.

Its pathway is mycotoxin biosynthesis; aflatoxin biosynthesis. Norsolorinic acid reductase; part of the gene cluster that mediates the biosynthesis of aflatoxins, a group of polyketide-derived furanocoumarins, and part of the most toxic and carcinogenic compounds among the known mycotoxins. The four major aflatoxins produced by A.parasiticus are aflatoxin B1 (AFB1), aflatoxin B2 (AFB2), aflatoxin G1 (AFG1) and aflatoxin G2 (AFG2). Within the aflatoxin pathway, the norsolorinic acid reductase aflE may play a role in the conversion of norsolorinic acid (NOR) to averantin (AVN). The biosynthesis of aflatoxins begins with the norsolorinic acid synthase aflC that combines a hexanoyl starter unit produced by the fatty acid synthase aflA/aflB and 7 malonyl-CoA extender units to synthesize the precursor NOR. The second step is the conversion of NOR to averantin and requires the norsolorinic acid ketoreductase aflD, which catalyzes the dehydration of norsolorinic acid to form (1'S)-averantin. The norsolorinic acid reductases aflE and aflF may also play a role in the conversion of NOR to AVN. The cytochrome P450 monooxygenase aflG then catalyzes the hydroxylation of AVN to 5'hydroxyaverantin (HAVN). The next step is performed by the 5'-hydroxyaverantin dehydrogenase aflH that transforms HAVN to 5'-oxoaverantin (OAVN) which is further converted to averufin (AVF) by aflK that plays a dual role in the pathway, as a 5'-oxoaverantin cyclase that mediates conversion of 5'-oxoaverantin, as well as a versicolorin B synthase in a later step in the pathway. The averufin oxidase aflI catalyzes the conversion of AVF to versiconal hemiacetal acetate (VHA). VHA is then the substrate for the versiconal hemiacetal acetate esterase aflJ to yield versiconal (VAL). Versicolorin B synthase aflK then converts VAL to versicolorin B (VERB) by closing the bisfuran ring of aflatoxin which is required for DNA-binding, thus giving to aflatoxin its activity as a mutagen. Then, the activity of the versicolorin B desaturase aflL leads to versicolorin A (VERA). A branch point starts from VERB since it can also be converted to dihydrodemethylsterigmatocystin (DMDHST), probably also by aflL, VERA being a precursor for aflatoxins B1 and G1, and DMDHST for aflatoxins B2 and G2. Next, the versicolorin reductase aflM and the cytochrome P450 monooxygenase aflN are involved in conversion of VERA to demethylsterigmatocystin (DMST). AflX and aflY seem also involved in this step, through probable aflX-mediated epoxide ring-opening step following versicolorin A oxidation and aflY-mediated Baeyer-Villiger oxidation required for the formation of the xanthone ring. The methyltransferase aflO then leads to the modification of DMST to sterigmatocystin (ST), and of DMDHST to dihydrosterigmatocystin (DHST). Both ST and DHST are then substrates of the O-methyltransferase aflP to yield O-methylsterigmatocystin (OMST) and dihydro-O-methylsterigmatocystin (DHOMST), respectively. Finally OMST is converted to aflatoxins B1 and G1, and DHOMST to aflatoxins B2 and G2, via the action of several enzymes including O-methylsterigmatocystin oxidoreductase aflQ, the cytochrome P450 monooxygenase aflU, but also the NADH-dependent flavin oxidoreductase nadA which is specifically required for the synthesis of AFG1. In Aspergillus parasiticus (strain ATCC 56775 / NRRL 5862 / SRRC 143 / SU-1), this protein is Norsolorinic acid reductase B.